A 66-amino-acid polypeptide reads, in one-letter code: Large ribosomal subunit protein bL33c (66 aa).

It belongs to the bacterial ribosomal protein bL33 family.

It localises to the plastid. The protein resides in the chloroplast. The polypeptide is Large ribosomal subunit protein bL33c (Vitis vinifera (Grape)).